Here is a 237-residue protein sequence, read N- to C-terminus: Probable septum site-determining protein MinC (237 aa).

This sequence belongs to the MinC family. As to quaternary structure, interacts with MinD and FtsZ.

In terms of biological role, cell division inhibitor that blocks the formation of polar Z ring septums. Rapidly oscillates between the poles of the cell to destabilize FtsZ filaments that have formed before they mature into polar Z rings. Prevents FtsZ polymerization. The protein is Probable septum site-determining protein MinC of Neisseria gonorrhoeae.